We begin with the raw amino-acid sequence, 327 residues long: MFNDIPVFDYEDIQLIPNKCIISSRSQADTSVKLGNYTFKLPVIPANMQTIIDEEVAETLACEGYFYIMHRFNEEERKPFIKRMHDKGLIASISVGVKDYEYDFVTSLKEDAPEFITIDIAHGHSNSVIEMIQHIKQELPETFVIAGNVGTPEAVRELENAGADATKVGIGPGKVCITKVKTGFGTGGWQLAALRWCSKAARKPIIADGGIRTHGDIAKSIRFGASMVMIGSLFAGHLESPGKLVEVEGQQFKEYYGSASEYQKGEHKNVEGKKILLPVKGRLEDTLTEMQQDLQSSISYAGGKELDSLRHVDYVIVKNSIWNGDSI.

The Thioimidate intermediate role is filled by Cys176. NADP(+) is bound at residue 205 to 228; the sequence is IIADGGIRTHGDIAKSIRFGASMV.

The protein belongs to the IMPDH/GMPR family. GuaC type 2 subfamily.

It carries out the reaction IMP + NH4(+) + NADP(+) = GMP + NADPH + 2 H(+). Catalyzes the irreversible NADPH-dependent deamination of GMP to IMP. It functions in the conversion of nucleobase, nucleoside and nucleotide derivatives of G to A nucleotides, and in maintaining the intracellular balance of A and G nucleotides. The sequence is that of GMP reductase from Streptococcus agalactiae serotype V (strain ATCC BAA-611 / 2603 V/R).